The chain runs to 157 residues: DNA gyrase inhibitor (157 aa).

This sequence belongs to the DNA gyrase inhibitor family. In terms of assembly, interacts with DNA gyrase.

Its subcellular location is the cytoplasm. In terms of biological role, inhibits the supercoiling activity of DNA gyrase. Acts by inhibiting DNA gyrase at an early step, prior to (or at the step of) binding of DNA by the gyrase. It protects cells against toxins that target DNA gyrase, by inhibiting activity of these toxins and reducing the formation of lethal double-strand breaks in the cell. The protein is DNA gyrase inhibitor of Citrobacter rodentium (strain ICC168) (Citrobacter freundii biotype 4280).